The primary structure comprises 887 residues: MPSIGPIPTIPDEGSRGSSATAAPRRAMASYRDTTLGGRAEGVAFSAVEDSYTSSVSLARMLYGGDLEEWVRHTRPGVSLEIQSRAPVRFPPPNNPSSRRVTVVRAPMGSGKTTALLKWLGEALDAPDISALVVSCRRSFTRTLAKRFNDAELPGFATYFTSTDYTMAGEPFRRLLVQIESLHRVDDNLLNNYDILVLDEVMSTIGQLYSPTMVHLNKVDALLTRLLKTCPRVIAMDATANAQLVDFLASARGERSVHVIINSFAAPGFSQRDGTLLRTLGTDVLRAALGFVLVDDENGTKVMETDSRPISARLREVNSAGFFGRLMDRLVAGRNVCVFSSTVSFSEIVARFCSQFTDSILVLNSLRPSEDVAFWGGVRVLIYTTVVTVGLSFDTAHFHSMFAYVKPMSHGPDMVSVYQSLGRVRELIHNELLVYVDSSGARAEPIFTPMLLNHVVSRQGGWPAEFSQVTDALCCQFKARCGPAYRTASTRGLALFVRFKYKHFFERCTLASVGDSINILYTLLESNQMRVAIEGCQFPLTAAGFCDFLQDLRLDAYAARKEIKQLRGPGGIAATPTEVFENDDVAVFIQKYLRPGVAHDEILALLVELNSPIVREQFVNVAVLGACLRLPAALESPEVFAGVYKHYASGVVPVISDAGALESVSITPDVNVLARWDLYKSCTRHARDLAWDPSRGGSGLDMSEDFITNTLSADYNRFQSLLVEIAKCNVTPLEMLAAGAVRGVTTALSGRPKSRVPLSKGEHAVSLFKVLWEDVFGAKLAKSTQTFPGGVRVKNLRKDEIVALLESVNVNHSECKTHRELYALLMCNRKLFAGPRYKLRAPKWSRNLCFLELDNTGTCKTPLDAALADLAPSAWPQVYGAVDFDAL.

Residues 1-28 (MPSIGPIPTIPDEGSRGSSATAAPRRAM) are disordered. The Helicase ATP-binding domain occupies 93–258 (PNNPSSRRVT…ASARGERSVH (166 aa)). 106-113 (APMGSGKT) lines the ATP pocket.

It belongs to the herpesviridae OriBP family. In terms of assembly, homodimer. Interacts with the major DNA-binding protein. Interacts with the DNA helicase/primase complex-associated protein and the polymerase accessory protein.

Its subcellular location is the host nucleus. Its function is as follows. Functions as a docking protein to recruit essential components of the viral replication machinery to viral DNA origins. In the presence of the major DNA-binding protein, opens dsDNA leading to a conformational change in the origin that facilitates DNA unwinding and subsequent replication. In Equus caballus (Horse), this protein is Replication origin-binding protein.